The primary structure comprises 83 residues: Mu-theraphotoxin-Hhn2l (83 aa).

A signal peptide spans 1–21 (MKASMFLALAGLVLLFVVGYA). A propeptide spanning residues 22–48 (SESEEKEFPIELLSKIFAVDVFKGEER) is cleaved from the precursor. 3 cysteine pairs are disulfide-bonded: Cys50–Cys65, Cys57–Cys70, and Cys64–Cys77. Position 81 is a leucine amide (Leu81).

The protein belongs to the neurotoxin 10 (Hwtx-1) family. 15 (Hntx-3) subfamily. In terms of assembly, monomer. Expressed by the venom gland.

The protein resides in the secreted. In terms of biological role, lethal neurotoxin. Selectively blocks tetrodotoxin-sensitive voltage-gated sodium channels (Nav). Does not affect tetrodotoxin-resistant voltage-gated sodium channels or calcium channels. This Cyriopagopus hainanus (Chinese bird spider) protein is Mu-theraphotoxin-Hhn2l.